The chain runs to 327 residues: Beta-ketoacyl-[acyl-carrier-protein] synthase III (327 aa).

Catalysis depends on residues Cys-112 and His-253. Residues 254 to 258 (QANER) form an ACP-binding region. Residue Asn-283 is part of the active site.

Belongs to the thiolase-like superfamily. FabH family. As to quaternary structure, homodimer.

The protein localises to the cytoplasm. The catalysed reaction is malonyl-[ACP] + acetyl-CoA + H(+) = 3-oxobutanoyl-[ACP] + CO2 + CoA. It functions in the pathway lipid metabolism; fatty acid biosynthesis. Functionally, catalyzes the condensation reaction of fatty acid synthesis by the addition to an acyl acceptor of two carbons from malonyl-ACP. Catalyzes the first condensation reaction which initiates fatty acid synthesis and may therefore play a role in governing the total rate of fatty acid production. Possesses both acetoacetyl-ACP synthase and acetyl transacylase activities. Its substrate specificity determines the biosynthesis of branched-chain and/or straight-chain of fatty acids. This is Beta-ketoacyl-[acyl-carrier-protein] synthase III from Chlamydia muridarum (strain MoPn / Nigg).